A 130-amino-acid chain; its full sequence is Protein LLP homolog (130 aa).

Residues 1–21 (MAKSLRSKWKRKMRAEKRKKN) are compositionally biased toward basic residues. Disordered regions lie at residues 1–23 (MAKSLRSKWKRKMRAEKRKKNAP) and 57–76 (QEKMQCEEGRCDGADEEKDD). Residues 10–78 (KRKMRAEKRK…GADEEKDDMK (69 aa)) adopt a coiled-coil conformation. A Glycyl lysine isopeptide (Lys-Gly) (interchain with G-Cter in SUMO2) cross-link involves residue Lys-78. Residues 104–124 (RQRKRLKAKREKKRGKSRAKA) are compositionally biased toward basic residues. The segment at 104–130 (RQRKRLKAKREKKRGKSRAKAAKGLAW) is disordered.

Belongs to the learning-associated protein family. Interacts with CTCF, MYO1C and with the transcriptional machinery, including RNA polymerase II and TBP. Widely expressed, with high levels in testis and spleen and low levels in heart. In the brain, expressed in the cortex and hippocampus, and at very low levels in the cerebellum.

It is found in the nucleus. The protein resides in the nucleolus. It localises to the chromosome. Functionally, in hippocampal neurons, regulates dendritic and spine growth and synaptic transmission. The sequence is that of Protein LLP homolog (Llph) from Mus musculus (Mouse).